Reading from the N-terminus, the 153-residue chain is Neuromedin-S (153 aa).

The first 26 residues, 1 to 26 (MKHLRPQFPLILAIYCFCMLQIPSSG), serve as a signal peptide directing secretion. 3 consecutive propeptides follow at residues 27–69 (FPQP…IYKR), 70–105 (FLFHYSRTQEATHPVKTGFPPVHPLMHLAAKLANRR), and 106–108 (MKR). The residue at position 141 (N141) is an Asparagine amide. Positions 144-153 (NIEDEAQIQW) are excised as a propeptide.

The protein belongs to the NmU family.

Its subcellular location is the secreted. Functionally, implicated in the regulation of circadian rhythms through autocrine and/or paracrine actions. The protein is Neuromedin-S (NMS) of Homo sapiens (Human).